We begin with the raw amino-acid sequence, 1017 residues long: Probable beta-galactosidase B (1017 aa).

Residues 1–20 (MTRITKLCVLLLSSIGLLAA) form the signal peptide. Asn-23 is a glycosylation site (N-linked (GlcNAc...) asparagine). Residue Tyr-90 coordinates substrate. N-linked (GlcNAc...) asparagine glycosylation occurs at Asn-100. Asn-135, Ala-136, and Glu-137 together coordinate substrate. Asn-158 carries an N-linked (GlcNAc...) asparagine glycan. Substrate is bound at residue Asn-195. Glu-196 (proton donor) is an active-site residue. N-linked (GlcNAc...) asparagine glycosylation occurs at Asn-211. Tyr-265 is a substrate binding site. A disulfide bridge connects residues Cys-271 and Cys-324. Glu-308 acts as the Nucleophile in catalysis. Substrate is bound at residue Tyr-373. Asn-411, Asn-417, Asn-456, Asn-628, Asn-681, Asn-737, Asn-770, Asn-777, Asn-785, Asn-828, and Asn-829 each carry an N-linked (GlcNAc...) asparagine glycan.

This sequence belongs to the glycosyl hydrolase 35 family.

It is found in the secreted. It carries out the reaction Hydrolysis of terminal non-reducing beta-D-galactose residues in beta-D-galactosides.. Functionally, cleaves beta-linked terminal galactosyl residues from gangliosides, glycoproteins, and glycosaminoglycans. The chain is Probable beta-galactosidase B (lacB) from Aspergillus niger (strain ATCC MYA-4892 / CBS 513.88 / FGSC A1513).